A 277-amino-acid polypeptide reads, in one-letter code: Large ribosomal subunit protein uL2 (277 aa).

The tract at residues V223 to T264 is disordered.

It belongs to the universal ribosomal protein uL2 family. Part of the 50S ribosomal subunit. Forms a bridge to the 30S subunit in the 70S ribosome.

Functionally, one of the primary rRNA binding proteins. Required for association of the 30S and 50S subunits to form the 70S ribosome, for tRNA binding and peptide bond formation. It has been suggested to have peptidyltransferase activity; this is somewhat controversial. Makes several contacts with the 16S rRNA in the 70S ribosome. The chain is Large ribosomal subunit protein uL2 from Nitrosomonas eutropha (strain DSM 101675 / C91 / Nm57).